The primary structure comprises 344 residues: L-rhamnose-proton symporter (344 aa).

10 consecutive transmembrane segments (helical) span residues 4 to 24, 38 to 58, 72 to 92, 101 to 121, 131 to 151, 175 to 195, 214 to 234, 259 to 279, 290 to 310, and 323 to 343; these read AITM…CFYA, WSVG…ATLL, TLLP…NYGL, MGIG…TPII, TQGG…VGIV, LLLA…MNAA, LPSY…FCFI, LLLS…YAWG, MSWM…GLVL, and VLSL…LGMA.

Belongs to the L-rhamnose transporter (TC 2.A.7.6) family.

The protein resides in the cell inner membrane. It catalyses the reaction L-rhamnopyranose(in) + H(+)(in) = L-rhamnopyranose(out) + H(+)(out). Uptake of L-rhamnose across the cytoplasmic membrane with the concomitant transport of protons into the cell (symport system). The sequence is that of L-rhamnose-proton symporter from Klebsiella pneumoniae (strain 342).